We begin with the raw amino-acid sequence, 78 residues long: Delta-conotoxin-like Ai6.1 (78 aa).

Positions 1-22 (MKLTCVMIVAVLFLTAWTFATA) are cleaved as a signal peptide. Residues 23–49 (DDPRNGLGNLFSNAHHEMKNPEASKLN) constitute a propeptide that is removed on maturation. 3 disulfides stabilise this stretch: Cys-53–Cys-68, Cys-60–Cys-72, and Cys-67–Cys-77.

The protein belongs to the conotoxin O1 superfamily. Expressed by the venom duct.

The protein resides in the secreted. Functionally, delta-conotoxins bind to site 6 of voltage-gated sodium channels (Nav) and inhibit the inactivation process. This Conus ammiralis (Admiral cone) protein is Delta-conotoxin-like Ai6.1.